The primary structure comprises 428 residues: MKLITNKQGLVGAITVPGDKSMSHRSIMFGAIAEGKTVIRHFLRADDCLGTIKAFKALGVKIEETDEEIIVHGTGFDGLKQADGPLDIGNSGTTIRLMMGILAGRDFDTVILGDESIAKRPMNRVMLPLQQMGAKMHGKDGSEFAPITITGKQSLKRMEYHMPVASAQVKSAIIFAALQAEGETIIHEKEKTRDHTEHMIRQFGGEIEMDGLTIRVKGGQKFTGQEMTVPGDVSSAAFFIVAGLITPGSEIELTHVGLNPTRTGIFDVVKQMGGSLVVKDSSRSTGKLAGTVVVKTSKLKGTEIDGDIIPRLIDEIPVIALLATQAEGTTIIKDAAELKVKETNRIDAVATELNKMGADITPTEDGLIIHGKTPLHAANVTSYGDHRIGMMLQIAALLVEEGDVELERPEAVSVSYPTFFEDIRSLLK.

Residues K20, S21, and R25 each coordinate 3-phosphoshikimate. Residue K20 participates in phosphoenolpyruvate binding. Residues G92 and R120 each coordinate phosphoenolpyruvate. 4 residues coordinate 3-phosphoshikimate: S166, Q168, D314, and K341. Q168 contacts phosphoenolpyruvate. D314 acts as the Proton acceptor in catalysis. Phosphoenolpyruvate-binding residues include R345 and R387.

This sequence belongs to the EPSP synthase family. In terms of assembly, monomer.

It is found in the cytoplasm. It carries out the reaction 3-phosphoshikimate + phosphoenolpyruvate = 5-O-(1-carboxyvinyl)-3-phosphoshikimate + phosphate. Its pathway is metabolic intermediate biosynthesis; chorismate biosynthesis; chorismate from D-erythrose 4-phosphate and phosphoenolpyruvate: step 6/7. Functionally, catalyzes the transfer of the enolpyruvyl moiety of phosphoenolpyruvate (PEP) to the 5-hydroxyl of shikimate-3-phosphate (S3P) to produce enolpyruvyl shikimate-3-phosphate and inorganic phosphate. This Listeria monocytogenes serovar 1/2a (strain ATCC BAA-679 / EGD-e) protein is 3-phosphoshikimate 1-carboxyvinyltransferase.